A 524-amino-acid polypeptide reads, in one-letter code: Protein hunchback (524 aa).

Disordered stretches follow at residues 42-86 (IVKR…PQTQ) and 101-187 (YNHN…DEQS). A compositionally biased stretch (low complexity) spans 59 to 75 (SGSDFHSSSPSSDTSQD). Over residues 76-86 (LQHSYQSPQTQ) the composition is skewed to polar residues. 3 stretches are compositionally biased toward basic and acidic residues: residues 118–127 (KSEKEEKDME), 138–154 (RKPDDNQDHLRRLEMSL), and 164–178 (TSEHSVDELSGKSDN). 4 C2H2-type zinc fingers span residues 202–224 (FKCKQCDFVAITKLEQWNHSKVH), 231–253 (LTCPKCPFITEYKHHLEYHLRNH), 259–281 (FQCNKCDYTCVNKSMLNSHMKSH), and 298–311 (YCHSLKIHLRRYGH). A disordered region spans residues 402–442 (DLSKPGCSYTGEQKSRRKGPAFKVDPTQVESEEEDEETSTT). 2 consecutive C2H2-type zinc fingers follow at residues 471 to 493 (NSCQYCNIAFGDAVLYTIHMGYH) and 499 to 523 (FTCNMCGVECSDKVSFFLHIARVSH).

This sequence belongs to the hunchback C2H2-type zinc-finger protein family.

The protein resides in the nucleus. Functionally, gap class segmentation protein that controls development of head structures. The polypeptide is Protein hunchback (hb) (Tribolium castaneum (Red flour beetle)).